We begin with the raw amino-acid sequence, 132 residues long: Large ribosomal subunit protein bL12 (132 aa).

This sequence belongs to the bacterial ribosomal protein bL12 family. In terms of assembly, homodimer. Part of the ribosomal stalk of the 50S ribosomal subunit. Forms a multimeric L10(L12)X complex, where L10 forms an elongated spine to which 2 to 4 L12 dimers bind in a sequential fashion. Binds GTP-bound translation factors.

Functionally, forms part of the ribosomal stalk which helps the ribosome interact with GTP-bound translation factors. Is thus essential for accurate translation. This Chloroflexus aggregans (strain MD-66 / DSM 9485) protein is Large ribosomal subunit protein bL12.